The chain runs to 255 residues: Imidazole glycerol phosphate synthase subunit HisF (255 aa).

Active-site residues include Asp-12 and Asp-131.

It belongs to the HisA/HisF family. As to quaternary structure, heterodimer of HisH and HisF.

It is found in the cytoplasm. It carries out the reaction 5-[(5-phospho-1-deoxy-D-ribulos-1-ylimino)methylamino]-1-(5-phospho-beta-D-ribosyl)imidazole-4-carboxamide + L-glutamine = D-erythro-1-(imidazol-4-yl)glycerol 3-phosphate + 5-amino-1-(5-phospho-beta-D-ribosyl)imidazole-4-carboxamide + L-glutamate + H(+). The protein operates within amino-acid biosynthesis; L-histidine biosynthesis; L-histidine from 5-phospho-alpha-D-ribose 1-diphosphate: step 5/9. Its function is as follows. IGPS catalyzes the conversion of PRFAR and glutamine to IGP, AICAR and glutamate. The HisF subunit catalyzes the cyclization activity that produces IGP and AICAR from PRFAR using the ammonia provided by the HisH subunit. This Neisseria meningitidis serogroup C (strain 053442) protein is Imidazole glycerol phosphate synthase subunit HisF.